We begin with the raw amino-acid sequence, 180 residues long: Vacuolar ATPase assembly protein VMA22 (180 aa).

The stretch at Gln-16–Glu-37 forms a coiled coil. The span at Glu-92–Leu-101 shows a compositional bias: basic and acidic residues. The segment at Glu-92–Pro-122 is disordered. A coiled-coil region spans residues Ser-153–Glu-176.

Accessory component of the multisubunit proton-transporting vacuolar (V)-ATPase protein pump. In terms of tissue distribution, expressed throughout the brain.

The protein resides in the endosome. Its subcellular location is the lysosome. It localises to the endoplasmic reticulum-Golgi intermediate compartment. It is found in the cytoplasmic vesicle. The protein localises to the COPI-coated vesicle. The protein resides in the endoplasmic reticulum. Functionally, accessory component of the proton-transporting vacuolar (V)-ATPase protein pump involved in intracellular iron homeostasis. In aerobic conditions, required for intracellular iron homeostasis, thus triggering the activity of Fe(2+) prolyl hydroxylase (PHD) enzymes, and leading to HIF1A hydroxylation and subsequent proteasomal degradation. Necessary for endolysosomal acidification and lysosomal degradation. May be involved in Golgi homeostasis. The polypeptide is Vacuolar ATPase assembly protein VMA22 (Homo sapiens (Human)).